The following is a 500-amino-acid chain: Cytochrome P450 monooxygenase ausR (500 aa).

Residues 15–35 (GVGLYILWTVAVLFVIFKLLA) form a helical membrane-spanning segment. Cys439 lines the heme pocket.

Belongs to the cytochrome P450 family. Heme is required as a cofactor.

It localises to the membrane. The protein operates within secondary metabolite biosynthesis; terpenoid biosynthesis. In terms of biological role, cytochrome P450 monooxygenase; part of the gene cluster that mediates the biosynthesis of calidodehydroaustin, a fungal meroterpenoid. The first step of the pathway is the synthesis of 3,5-dimethylorsellinic acid by the polyketide synthase ausA. 3,5-dimethylorsellinic acid is then prenylated by the polyprenyl transferase ausN. Further epoxidation by the FAD-dependent monooxygenase ausM and cyclization by the probable terpene cyclase ausL lead to the formation of protoaustinoid A. Protoaustinoid A is then oxidized to spiro-lactone preaustinoid A3 by the combined action of the FAD-binding monooxygenases ausB and ausC, and the dioxygenase ausE. Acid-catalyzed keto-rearrangement and ring contraction of the tetraketide portion of preaustinoid A3 by ausJ lead to the formation of preaustinoid A4. The aldo-keto reductase ausK, with the help of ausH, is involved in the next step by transforming preaustinoid A4 into isoaustinone which is in turn hydroxylated by the P450 monooxygenase ausI to form austinolide. The cytochrome P450 monooxygenase ausG modifies austinolide to austinol. Austinol is further acetylated to austin by the O-acetyltransferase ausP, which spontaneously changes to dehydroaustin. The cytochrome P450 monooxygenase ausR then converts dehydroaustin is into 7-dehydrodehydroaustin. The hydroxylation catalyzed by ausR permits the O-acetyltransferase ausQ to add an additional acetyl group to the molecule, leading to the formation of acetoxydehydroaustin. The short chain dehydrogenase ausT catalyzes the reduction of the double bond present between carbon atoms 1 and 2 to convert 7-dehydrodehydroaustin into 1,2-dihydro-7-hydroxydehydroaustin. AusQ catalyzes not only an acetylation reaction but also the addition of the PKS ausV diketide product to 1,2-dihydro-7-hydroxydehydroaustin, forming precalidodehydroaustin. Finally, the iron/alpha-ketoglutarate-dependent dioxygenase converts precalidodehydroaustin into calidodehydroaustin. The chain is Cytochrome P450 monooxygenase ausR from Aspergillus calidoustus.